A 349-amino-acid polypeptide reads, in one-letter code: DNA polymerase IV (349 aa).

Residues 3 to 187 enclose the UmuC domain; that stretch reads VLFVDFDYFF…LDISKVPGVG (185 aa). Residues aspartate 7 and aspartate 105 each contribute to the Mg(2+) site. Residue glutamate 106 is part of the active site.

The protein belongs to the DNA polymerase type-Y family. In terms of assembly, monomer. It depends on Mg(2+) as a cofactor.

The protein resides in the cytoplasm. It catalyses the reaction DNA(n) + a 2'-deoxyribonucleoside 5'-triphosphate = DNA(n+1) + diphosphate. In terms of biological role, poorly processive, error-prone DNA polymerase involved in untargeted mutagenesis. Copies undamaged DNA at stalled replication forks, which arise in vivo from mismatched or misaligned primer ends. These misaligned primers can be extended by PolIV. Exhibits no 3'-5' exonuclease (proofreading) activity. May be involved in translesional synthesis. The sequence is that of DNA polymerase IV from Metallosphaera sedula (strain ATCC 51363 / DSM 5348 / JCM 9185 / NBRC 15509 / TH2).